The sequence spans 31 residues: Hemocyanin subunit 1 (31 aa).

It belongs to the tyrosinase family. Hemocyanin subfamily. As to expression, hemolymph.

It is found in the secreted. The protein localises to the extracellular space. Hemocyanins are copper-containing oxygen carriers occurring freely dissolved in the hemolymph of many mollusks and arthropods. In Homarus americanus (American lobster), this protein is Hemocyanin subunit 1.